Reading from the N-terminus, the 220-residue chain is Cytidylate kinase (220 aa).

9–17 (GPAASGKST) contacts ATP.

The protein belongs to the cytidylate kinase family. Type 1 subfamily.

It is found in the cytoplasm. It carries out the reaction CMP + ATP = CDP + ADP. It catalyses the reaction dCMP + ATP = dCDP + ADP. This Thermotoga petrophila (strain ATCC BAA-488 / DSM 13995 / JCM 10881 / RKU-1) protein is Cytidylate kinase.